The primary structure comprises 473 residues: Spliceosome-associated protein CWC27 homolog (473 aa).

Ser-2 bears the N-acetylserine mark. Positions Thr-11–Val-166 constitute a PPIase cyclophilin-type domain. A compositionally biased stretch (basic and acidic residues) spans Arg-177 to Lys-193. Disordered regions lie at residues Arg-177 to Thr-386 and Gln-399 to Arg-473. A coiled-coil region spans residues Ser-206–Lys-230. A compositionally biased stretch (basic and acidic residues) spans Ser-231–His-241. Acidic residues predominate over residues Gly-257–Asp-275. Basic and acidic residues-rich tracts occupy residues Gly-276–Ala-287, Glu-305–Glu-348, and Glu-360–Arg-372. Residues Glu-307–Lys-378 adopt a coiled-coil conformation. Position 347 is a phosphoserine (Ser-347). Acidic residues predominate over residues Pro-405 to Gly-419. Basic and acidic residues-rich tracts occupy residues Gln-426–Ser-438 and Arg-458–Arg-473.

It belongs to the cyclophilin-type PPIase family. Part of the activated spliceosome B/catalytic step 1 spliceosome, one of the forms of the spliceosome which has a well-formed active site but still cannot catalyze the branching reaction and is composed at least of 52 proteins, the U2, U5 and U6 snRNAs and the pre-mRNA. Recruited during early steps of activated spliceosome B maturation, it is probably one of the first proteins released from this complex as he matures to the spliceosome C complex. Component of the minor spliceosome, which splices U12-type introns.

It localises to the nucleus. Its function is as follows. As part of the spliceosome, plays a role in pre-mRNA splicing. Probable inactive PPIase with no peptidyl-prolyl cis-trans isomerase activity. As a component of the minor spliceosome, involved in the splicing of U12-type introns in pre-mRNAs. The sequence is that of Spliceosome-associated protein CWC27 homolog from Macaca fascicularis (Crab-eating macaque).